Reading from the N-terminus, the 357-residue chain is Probable nitronate monooxygenase (357 aa).

FMN contacts are provided by residues N71, Q175, G180, G219, and 238-241; that span reads QMGT.

Belongs to the nitronate monooxygenase family. NMO class I subfamily. It depends on FMN as a cofactor.

The catalysed reaction is 3 propionate 3-nitronate + 3 O2 + H2O = 3 3-oxopropanoate + 2 nitrate + nitrite + H2O2 + 3 H(+). Nitronate monooxygenase that uses molecular oxygen to catalyze the oxidative denitrification of alkyl nitronates. Acts on propionate 3-nitronate (P3N), the presumed physiological substrate. Probably functions in the detoxification of P3N, a metabolic poison produced by plants and fungi as a defense mechanism. This Staphylococcus haemolyticus (strain JCSC1435) protein is Probable nitronate monooxygenase.